We begin with the raw amino-acid sequence, 247 residues long: Carboxy-S-adenosyl-L-methionine synthase (247 aa).

S-adenosyl-L-methionine-binding positions include Tyr39, 64–66, 89–90, 117–118, Asn132, and Arg199; these read GCS, DN, and DI.

Belongs to the class I-like SAM-binding methyltransferase superfamily. Cx-SAM synthase family. As to quaternary structure, homodimer.

The enzyme catalyses prephenate + S-adenosyl-L-methionine = carboxy-S-adenosyl-L-methionine + 3-phenylpyruvate + H2O. Its function is as follows. Catalyzes the conversion of S-adenosyl-L-methionine (SAM) to carboxy-S-adenosyl-L-methionine (Cx-SAM). In Escherichia coli (strain K12 / MC4100 / BW2952), this protein is Carboxy-S-adenosyl-L-methionine synthase.